The primary structure comprises 502 residues: Glycerol kinase (502 aa).

T14 serves as a coordination point for ADP. ATP is bound by residues T14, T15, and S16. T14 contributes to the sn-glycerol 3-phosphate binding site. R18 contacts ADP. Residues R84, E85, Y136, and D246 each contribute to the sn-glycerol 3-phosphate site. Residues R84, E85, Y136, D246, and Q247 each coordinate glycerol. Residues T268 and G311 each contribute to the ADP site. ATP is bound by residues T268, G311, Q315, and G412. G412 and N416 together coordinate ADP.

This sequence belongs to the FGGY kinase family.

It catalyses the reaction glycerol + ATP = sn-glycerol 3-phosphate + ADP + H(+). It participates in polyol metabolism; glycerol degradation via glycerol kinase pathway; sn-glycerol 3-phosphate from glycerol: step 1/1. Inhibited by fructose 1,6-bisphosphate (FBP). In terms of biological role, key enzyme in the regulation of glycerol uptake and metabolism. Catalyzes the phosphorylation of glycerol to yield sn-glycerol 3-phosphate. The sequence is that of Glycerol kinase from Pasteurella multocida (strain Pm70).